Here is a 270-residue protein sequence, read N- to C-terminus: tRNA 2-(methylsulfanyl)-N(6)-isopentenyladenosine(37) hydroxylase (270 aa).

The Fe cation site is built by Glu59, Glu137, His140, Glu190, Glu219, and His222.

It belongs to the MiaE family. Monomer. It depends on Fe cation as a cofactor.

It catalyses the reaction 2-methylsulfanyl-N(6)-dimethylallyladenosine(37) in tRNA + AH2 + O2 = N(6)-[(2E)-4-hydroxy-3-methylbut-2-en-1-yl]-2-(methylsulfanyl)adenosine(37) in tRNA + A + H2O. It participates in tRNA modification; 2-methylthio-N-6-(cis-hydroxy)isopentenyl adenosine-tRNA biosynthesis. Involved in specific tRNA modification. Catalyzes the oxygen-dependent hydroxylation of 2-methylthio-N-6-isopentenyl adenosine (ms2i6A) to produce 2-methylthio-N-6-(cis-hydroxy)isopentenyl adenosine (ms2io6A) at position 37 in tRNAs. Can also use N6-(dimethylallyl)adenosine (i6A) as substrate, with lower efficiency. The presence of the hydroxyl group on the tRNA may regulate the ability of S.typhimurium to grow on the citric acid cycle (CAC) intermediates succinate, fumarate and malate. This chain is tRNA 2-(methylsulfanyl)-N(6)-isopentenyladenosine(37) hydroxylase, found in Salmonella typhimurium (strain LT2 / SGSC1412 / ATCC 700720).